Consider the following 971-residue polypeptide: uncharacterized protein (971 aa).

The N-terminal stretch at 1 to 24 (MQSNLLKVLGVLAIVATLVCFIFA) is a signal peptide. The segment at 127–146 (RTRPGKSNLDDSNQMIPIPR) is disordered. 6 helical membrane passes run 611–631 (IKAILILYVMTYGAMFLLGFA), 721–741 (LGLSGIIYFIITFIAVCIVII), 753–773 (AFMATCILIGIAPLFISFLLF), 795–815 (VVMMAGIIVLTQLFTIYLDFV), 832–852 (FIGTILPIALLNVPIFCINWF), and 865–885 (GVNMQNIVALVIIAYGMYGYV). Basic residues predominate over residues 933-944 (TSRAKSRLKQRN). The segment at 933 to 971 (TSRAKSRLKQRNRTLEHAEQNSKKYMKKIGENTNEGTLK) is disordered. The segment covering 945-954 (RTLEHAEQNS) has biased composition (basic and acidic residues).

This sequence belongs to the TrbL/VirB6 family.

The protein localises to the cell membrane. This is an uncharacterized protein from Rickettsia typhi (strain ATCC VR-144 / Wilmington).